The primary structure comprises 66 residues: Beta-defensin 107A (66 aa).

Residues 1 to 22 (MKIFFFIFAALFLLAQIFQART) form the signal peptide. Cystine bridges form between C37–C51 and C41–C60.

The protein belongs to the beta-defensin family.

Its subcellular location is the secreted. In terms of biological role, has antibacterial activity. The polypeptide is Beta-defensin 107A (DEFB107A) (Gorilla gorilla gorilla (Western lowland gorilla)).